The chain runs to 71 residues: Protein translocase subunit SecE (71 aa).

Residues 43–63 (VAGVGILAVGAIGFIIYVLLT) form a helical membrane-spanning segment.

It belongs to the SecE/SEC61-gamma family. Component of the Sec protein translocase complex. Heterotrimer consisting of SecY (alpha), SecG (beta) and SecE (gamma) subunits. The heterotrimers can form oligomers, although 1 heterotrimer is thought to be able to translocate proteins. Interacts with the ribosome. May interact with SecDF, and other proteins may be involved.

The protein localises to the cell membrane. Essential subunit of the Sec protein translocation channel SecYEG. Clamps together the 2 halves of SecY. May contact the channel plug during translocation. This Methanosarcina barkeri (strain Fusaro / DSM 804) protein is Protein translocase subunit SecE.